We begin with the raw amino-acid sequence, 327 residues long: Ornithine carbamoyltransferase (327 aa).

Carbamoyl phosphate is bound by residues 56–59, Q83, R107, and 134–137; these read STRT and HPTQ. L-ornithine contacts are provided by residues N166, D230, and 234 to 235; that span reads SM. Residues 269 to 270 and R314 contribute to the carbamoyl phosphate site; that span reads CL.

It belongs to the aspartate/ornithine carbamoyltransferase superfamily. OTCase family.

The protein localises to the cytoplasm. The enzyme catalyses carbamoyl phosphate + L-ornithine = L-citrulline + phosphate + H(+). Its pathway is amino-acid degradation; L-arginine degradation via ADI pathway; carbamoyl phosphate from L-arginine: step 2/2. Functionally, reversibly catalyzes the transfer of the carbamoyl group from carbamoyl phosphate (CP) to the N(epsilon) atom of ornithine (ORN) to produce L-citrulline. The sequence is that of Ornithine carbamoyltransferase from Borreliella burgdorferi (strain ZS7) (Borrelia burgdorferi).